A 415-amino-acid polypeptide reads, in one-letter code: Serine hydroxymethyltransferase (415 aa).

Residues Leu117 and 121–123 (GHL) each bind (6S)-5,6,7,8-tetrahydrofolate. Position 225 is an N6-(pyridoxal phosphate)lysine (Lys225). (6S)-5,6,7,8-tetrahydrofolate-binding positions include Glu241 and 349–351 (SPF).

The protein belongs to the SHMT family. As to quaternary structure, homodimer. It depends on pyridoxal 5'-phosphate as a cofactor.

Its subcellular location is the cytoplasm. It catalyses the reaction (6R)-5,10-methylene-5,6,7,8-tetrahydrofolate + glycine + H2O = (6S)-5,6,7,8-tetrahydrofolate + L-serine. It participates in one-carbon metabolism; tetrahydrofolate interconversion. It functions in the pathway amino-acid biosynthesis; glycine biosynthesis; glycine from L-serine: step 1/1. In terms of biological role, catalyzes the reversible interconversion of serine and glycine with tetrahydrofolate (THF) serving as the one-carbon carrier. This reaction serves as the major source of one-carbon groups required for the biosynthesis of purines, thymidylate, methionine, and other important biomolecules. Also exhibits THF-independent aldolase activity toward beta-hydroxyamino acids, producing glycine and aldehydes, via a retro-aldol mechanism. This Campylobacter hominis (strain ATCC BAA-381 / DSM 21671 / CCUG 45161 / LMG 19568 / NCTC 13146 / CH001A) protein is Serine hydroxymethyltransferase.